Reading from the N-terminus, the 70-residue chain is Movement protein TGBp3 (70 aa).

Topologically, residues 1-6 (MEANTY) are lumenal. Residues 7 to 27 (LNAIILVLVVTIIAVISTSLV) traverse the membrane as a helical segment. The Cytoplasmic portion of the chain corresponds to 28-70 (RTEPCVIKITGESITVLACKLDAETIRAIADLKPLSVERLSFH).

This sequence belongs to the Tymovirales TGBp3 protein family.

The protein resides in the host endoplasmic reticulum membrane. Functionally, plays a role in viral cell-to-cell propagation, by facilitating genome transport to neighboring plant cells through plasmosdesmata. May induce the formation of granular vesicles derived from the Endoplasmic reticulum, which align on actin filaments. This is Movement protein TGBp3 from Potato virus X (PVX).